The chain runs to 364 residues: 3-isopropylmalate dehydrogenase (364 aa).

Residue 78–91 participates in NAD(+) binding; the sequence is GKKWDYLSIDKRPE. Substrate is bound by residues Arg-99, Arg-109, Arg-138, and Asp-227. 3 residues coordinate Mg(2+): Asp-227, Asp-251, and Asp-255. 285 to 297 lines the NAD(+) pocket; sequence GSAPDIAGKNIAN.

Belongs to the isocitrate and isopropylmalate dehydrogenases family. LeuB type 1 subfamily. In terms of assembly, homodimer. Mg(2+) serves as cofactor. It depends on Mn(2+) as a cofactor.

It is found in the cytoplasm. The enzyme catalyses (2R,3S)-3-isopropylmalate + NAD(+) = 4-methyl-2-oxopentanoate + CO2 + NADH. It participates in amino-acid biosynthesis; L-leucine biosynthesis; L-leucine from 3-methyl-2-oxobutanoate: step 3/4. Catalyzes the oxidation of 3-carboxy-2-hydroxy-4-methylpentanoate (3-isopropylmalate) to 3-carboxy-4-methyl-2-oxopentanoate. The product decarboxylates to 4-methyl-2 oxopentanoate. The chain is 3-isopropylmalate dehydrogenase from Buchnera aphidicola subsp. Uroleucon erigeronensis.